We begin with the raw amino-acid sequence, 427 residues long: GTPase Obg (427 aa).

The 158-residue stretch at 1–158 (MFVDIAKIYV…LWVILELKVL (158 aa)) folds into the Obg domain. Residues 159–330 (ADVGLIGYPN…VLKRAYELLK (172 aa)) form the OBG-type G domain. Residues 165–172 (GYPNVGKS), 190–194 (FTTKY), 212–215 (DIPG), 282–285 (NKMD), and 311–313 (SAA) each bind GTP. Positions 172 and 192 each coordinate Mg(2+). The region spanning 347–427 (FVYYKKKDVK…ILDVEFEYYE (81 aa)) is the OCT domain.

Belongs to the TRAFAC class OBG-HflX-like GTPase superfamily. OBG GTPase family. Monomer. Mg(2+) serves as cofactor.

The protein resides in the cytoplasm. Its function is as follows. An essential GTPase which binds GTP, GDP and possibly (p)ppGpp with moderate affinity, with high nucleotide exchange rates and a fairly low GTP hydrolysis rate. Plays a role in control of the cell cycle, stress response, ribosome biogenesis and in those bacteria that undergo differentiation, in morphogenesis control. This chain is GTPase Obg, found in Caldicellulosiruptor saccharolyticus (strain ATCC 43494 / DSM 8903 / Tp8T 6331).